A 390-amino-acid polypeptide reads, in one-letter code: Peroxisomal sarcosine oxidase (390 aa).

An FAD-binding site is contributed by 9 to 39 (DAIVIGAGIQGCFTAYHLAKHRKRILLLEQF). At Lys-126 the chain carries N6-acetyllysine. Residue Cys-319 is modified to S-8alpha-FAD cysteine. The Microbody targeting signal motif lies at 388–390 (AHL).

It belongs to the MSOX/MTOX family. Requires FAD as cofactor. As to expression, expressed in the liver and kidney.

It localises to the peroxisome. It carries out the reaction sarcosine + O2 + H2O = formaldehyde + glycine + H2O2. It catalyses the reaction L-pipecolate + O2 = L-1-piperideine-6-carboxylate + H2O2 + H(+). Functionally, metabolizes sarcosine and L-pipecolic acid. This is Peroxisomal sarcosine oxidase (PIPOX) from Homo sapiens (Human).